Here is a 267-residue protein sequence, read N- to C-terminus: Putative carboxymethylenebutenolidase (267 aa).

Catalysis depends on residues Cys-137, Asp-194, and His-226.

Belongs to the dienelactone hydrolase family.

The catalysed reaction is 2-(5-oxo-2,5-dihydrofuran-2-ylidene)acetate + H2O = 4-oxohex-2-enedioate + H(+). This is Putative carboxymethylenebutenolidase from Yersinia pestis.